A 160-amino-acid chain; its full sequence is Phosphopantetheine adenylyltransferase (160 aa).

Residue T9 coordinates substrate. Residues 9 to 10 (TF) and H17 each bind ATP. Substrate contacts are provided by K41, L73, and R87. ATP-binding positions include 88-90 (GLR), E98, and 123-129 (YSFISST).

It belongs to the bacterial CoaD family. As to quaternary structure, homohexamer. Mg(2+) is required as a cofactor.

It is found in the cytoplasm. It catalyses the reaction (R)-4'-phosphopantetheine + ATP + H(+) = 3'-dephospho-CoA + diphosphate. Its pathway is cofactor biosynthesis; coenzyme A biosynthesis; CoA from (R)-pantothenate: step 4/5. In terms of biological role, reversibly transfers an adenylyl group from ATP to 4'-phosphopantetheine, yielding dephospho-CoA (dPCoA) and pyrophosphate. This Ectopseudomonas mendocina (strain ymp) (Pseudomonas mendocina) protein is Phosphopantetheine adenylyltransferase.